A 521-amino-acid chain; its full sequence is Phospholipase C B (521 aa).

A signal peptide (tat-type signal) is located at residues 1–39; that stretch reads MGSEHPVDGMTRRQFFAKAAAATTAGAFMSLAGPIIEKA. The segment at 501 to 521 is disordered; sequence FPQSMPTQETAPTRGIPSGLC.

It belongs to the bacterial phospholipase C family. Predicted to be exported by the Tat system. The position of the signal peptide cleavage has not been experimentally proven.

Its subcellular location is the secreted. The protein resides in the cell wall. The enzyme catalyses a 1,2-diacyl-sn-glycero-3-phosphocholine + H2O = phosphocholine + a 1,2-diacyl-sn-glycerol + H(+). In terms of biological role, involved in virulence. Induces cytotoxic effects on mouse macrophage cell lines, via direct or indirect enzymatic hydrolysis of cell membrane phospholipids. Hydrolyzes phosphatidylcholine. This Mycobacterium tuberculosis (strain CDC 1551 / Oshkosh) protein is Phospholipase C B.